Here is an 815-residue protein sequence, read N- to C-terminus: Polyribonucleotide nucleotidyltransferase (815 aa).

Positions 489 and 495 each coordinate Mg(2+). Residues 556–615 enclose the KH domain; the sequence is PRFYTLQIPTDKIRDLIGPGGKVIRGIVEATGVKIDVEDSGKVNVASSDQEAAKKALKMI. The 68-residue stretch at 625-692 folds into the S1 motif domain; sequence GKTYLGTVTR…DGNRIKLSRK (68 aa). Positions 700-815 are disordered; sequence AKMATEGGGD…GGGGGGRGRG (116 aa). Gly residues predominate over residues 723-734; sequence APGGVTFEGGYE. The segment covering 735-745 has biased composition (acidic residues); it reads GGDEPEVEEGE. Residues 775 to 815 show a composition bias toward gly residues; the sequence is PHGGGGGAGRGGRGRRPGGGGGGGRGGHGGRGGGGGGRGRG.

The protein belongs to the polyribonucleotide nucleotidyltransferase family. Requires Mg(2+) as cofactor.

Its subcellular location is the cytoplasm. It carries out the reaction RNA(n+1) + phosphate = RNA(n) + a ribonucleoside 5'-diphosphate. Functionally, involved in mRNA degradation. Catalyzes the phosphorolysis of single-stranded polyribonucleotides processively in the 3'- to 5'-direction. The chain is Polyribonucleotide nucleotidyltransferase from Koribacter versatilis (strain Ellin345).